The primary structure comprises 648 residues: Spike protein P3 (648 aa).

In terms of assembly, interacts with P6.

The protein localises to the virion membrane. Its function is as follows. P3 protein is necessary for adsorption onto host cells. Attaches to a type IV pilus of the host. This is Spike protein P3 (P3) from Pseudomonas savastanoi pv. phaseolicola (Pseudomonas syringae pv. phaseolicola).